A 204-amino-acid chain; its full sequence is Probable GTP-binding protein EngB (204 aa).

In terms of domain architecture, EngB-type G spans 27–201 (SGIEIAFAGR…SEKLDQWFSP (175 aa)). GTP is bound by residues 35–42 (GRSNAGKS), 62–66 (GRTQL), 80–83 (DLPG), 147–150 (TKAD), and 180–182 (FSA). Serine 42 and threonine 64 together coordinate Mg(2+).

The protein belongs to the TRAFAC class TrmE-Era-EngA-EngB-Septin-like GTPase superfamily. EngB GTPase family. Mg(2+) is required as a cofactor.

Necessary for normal cell division and for the maintenance of normal septation. The chain is Probable GTP-binding protein EngB from Histophilus somni (strain 129Pt) (Haemophilus somnus).